We begin with the raw amino-acid sequence, 133 residues long: MGPHRLLYQALCKAGDKFVYPVLPAFAKPAWNHAAGPKTVFFWAPTIKWTLIGAGLADLARPADKLSLYQNSALFATGAIWTRYCLVITPINYYLSSVNFFVMCTGLAQLCRIAHYRYQNPDWETKEIMETHN.

Helical transmembrane passes span 40–57, 73–91, and 100–116; these read VFFW…AGLA, ALFA…ITPI, and FFVM…IAHY.

The protein belongs to the mitochondrial pyruvate carrier (MPC) (TC 2.A.105) family.

It is found in the mitochondrion inner membrane. Its function is as follows. May mediate the uptake of pyruvate into mitochondria. The chain is Probable mitochondrial pyruvate carrier 2 from Caenorhabditis elegans.